Consider the following 528-residue polypeptide: GTPase Der (528 aa).

Composition is skewed to acidic residues over residues 1–12 and 30–62; these read MDVEGAFADEEE and GYDDDFAPDDSDEDEDDDDYEFDEDDFAAPDFG. Positions 1 to 62 are disordered; the sequence is MDVEGAFADE…EDDFAAPDFG (62 aa). EngA-type G domains lie at 90-253 and 263-436; these read CTVA…PEEP and RRVA…ENWD. Residues 96-103, 143-147, 205-208, 269-276, 316-320, and 381-384 each bind GTP; these read GRPNVGKS, DTGGW, NKFD, GKPNVGKS, DTAGL, and NKWD. One can recognise a KH-like domain in the interval 437-519; the sequence is RRVSTGQLNN…PIRIAVRVRE (83 aa).

The protein belongs to the TRAFAC class TrmE-Era-EngA-EngB-Septin-like GTPase superfamily. EngA (Der) GTPase family. In terms of assembly, associates with the 50S ribosomal subunit.

GTPase that plays an essential role in the late steps of ribosome biogenesis. In Corynebacterium efficiens (strain DSM 44549 / YS-314 / AJ 12310 / JCM 11189 / NBRC 100395), this protein is GTPase Der.